Consider the following 464-residue polypeptide: Trigger factor (464 aa).

The PPIase FKBP-type domain maps to 169–256; that stretch reads GDVAIVDYRG…MKELKAKELP (88 aa).

This sequence belongs to the FKBP-type PPIase family. Tig subfamily.

The protein resides in the cytoplasm. The catalysed reaction is [protein]-peptidylproline (omega=180) = [protein]-peptidylproline (omega=0). Its function is as follows. Involved in protein export. Acts as a chaperone by maintaining the newly synthesized protein in an open conformation. Functions as a peptidyl-prolyl cis-trans isomerase. This is Trigger factor from Microcystis aeruginosa (strain NIES-843 / IAM M-2473).